A 260-amino-acid polypeptide reads, in one-letter code: Adenosylcobinamide-GDP ribazoletransferase (260 aa).

6 helical membrane-spanning segments follow: residues 40 to 60 (AFPF…LLLL), 64 to 84 (ADPL…TGAL), 117 to 137 (YGAI…AVIA), 142 to 162 (PLTA…AIAW), 188 to 208 (QFAL…AFGL), and 209 to 229 (RPLV…TAFI).

The protein belongs to the CobS family. Mg(2+) serves as cofactor.

The protein resides in the cell inner membrane. It catalyses the reaction alpha-ribazole + adenosylcob(III)inamide-GDP = adenosylcob(III)alamin + GMP + H(+). The enzyme catalyses alpha-ribazole 5'-phosphate + adenosylcob(III)inamide-GDP = adenosylcob(III)alamin 5'-phosphate + GMP + H(+). It functions in the pathway cofactor biosynthesis; adenosylcobalamin biosynthesis; adenosylcobalamin from cob(II)yrinate a,c-diamide: step 7/7. In terms of biological role, joins adenosylcobinamide-GDP and alpha-ribazole to generate adenosylcobalamin (Ado-cobalamin). Also synthesizes adenosylcobalamin 5'-phosphate from adenosylcobinamide-GDP and alpha-ribazole 5'-phosphate. The chain is Adenosylcobinamide-GDP ribazoletransferase from Rhizobium johnstonii (strain DSM 114642 / LMG 32736 / 3841) (Rhizobium leguminosarum bv. viciae).